A 596-amino-acid polypeptide reads, in one-letter code: Serine/arginine (SR)-type shuttling mRNA binding protein (596 aa).

Over residues 1 to 11 (MSEVEYNQENT) the composition is skewed to polar residues. 2 disordered regions span residues 1–83 (MSEV…SRKS) and 244–279 (DRED…FGPP). 2 stretches are compositionally biased toward basic and acidic residues: residues 12–23 (HYAEVDNFDRDA) and 42–66 (SDRR…RSFN). Residues 182-246 (FHRQPSIVYT…RQVFVREDRE (65 aa)) enclose the RRM 1 domain. Residues 259–275 (PRGGGRGGLGGSSGRGS) are compositionally biased toward gly residues. The RRM 2 domain occupies 302-379 (TQLFIGNLPF…RMLEVRLDKF (78 aa)). The segment at 458 to 478 (GYSTRASGPTSARAPAPPAAP) is disordered. Positions 480-556 (QQIFVKNLPW…RPLDIEFNRR (77 aa)) constitute an RRM 3 domain. The span at 563–572 (GGGSVNGGND) shows a compositional bias: gly residues. The disordered stretch occupies residues 563–596 (GGGSVNGGNDGNAPMVEVSAQDDEDGDAPVPMQG).

The protein resides in the nucleus. Its function is as follows. Binds to intron-containing transcripts and is involved in quality control for the export of spliced mRNAs from the nucleus. Binds to pre-mRNAs until splicing is completed or until faulty mRNAs are degraded. The chain is Serine/arginine (SR)-type shuttling mRNA binding protein from Mycosarcoma maydis (Corn smut fungus).